The following is a 360-amino-acid chain: Chorismate synthase (360 aa).

Residues Arg48 and Arg54 each coordinate NADP(+). FMN is bound by residues 125–127 (RSS), 242–243 (NG), Gly283, 298–302 (KPTSS), and Arg324.

Belongs to the chorismate synthase family. As to quaternary structure, homotetramer. The cofactor is FMNH2.

The catalysed reaction is 5-O-(1-carboxyvinyl)-3-phosphoshikimate = chorismate + phosphate. It functions in the pathway metabolic intermediate biosynthesis; chorismate biosynthesis; chorismate from D-erythrose 4-phosphate and phosphoenolpyruvate: step 7/7. Functionally, catalyzes the anti-1,4-elimination of the C-3 phosphate and the C-6 proR hydrogen from 5-enolpyruvylshikimate-3-phosphate (EPSP) to yield chorismate, which is the branch point compound that serves as the starting substrate for the three terminal pathways of aromatic amino acid biosynthesis. This reaction introduces a second double bond into the aromatic ring system. This chain is Chorismate synthase, found in Gluconobacter oxydans (strain 621H) (Gluconobacter suboxydans).